Reading from the N-terminus, the 1073-residue chain is PX domain-containing protein LEC1 (1073 aa).

The segment covering 218–228 (CTESVDNDKSS) has biased composition (basic and acidic residues). Positions 218-240 (CTESVDNDKSSKSTPTSSPKSHA) are disordered. The segment covering 229-238 (KSTPTSSPKS) has biased composition (low complexity). One can recognise a PX domain in the interval 273 to 506 (LFSKLSLGVP…RFFLSGPNLD (234 aa)). Residues serine 310 and serine 451 each carry the phosphoserine modification. Residues 431–456 (IKEEDNIDEDEYEEEGEGEESDFDEY) are disordered. Over residues 432–453 (KEEDNIDEDEYEEEGEGEESDF) the composition is skewed to acidic residues.

It localises to the endoplasmic reticulum membrane. The protein localises to the lipid droplet. In terms of biological role, phosphoinositide-binding protein that plays a role in regulation of ergosterol distribution in the cell. Facilitates ergosterol transport between plasma membrane and lipid droplets. The sequence is that of PX domain-containing protein LEC1 from Saccharomyces cerevisiae (strain ATCC 204508 / S288c) (Baker's yeast).